A 226-amino-acid polypeptide reads, in one-letter code: Protein B (226 aa).

Positions 37-100 (DNVQGTDYEK…FSTQHLANKV (64 aa)) are igG constant region-binding. Repeats lie at residues 158 to 168 (TKSKLDKEIWN), 169 to 179 (TRFTRDKKVLN), and 180 to 190 (VKEFKVYNTLN).

It localises to the secreted. Protein B belongs to the group of bacterial Fc-binding protein. This chain is Protein B, found in Streptococcus agalactiae.